The chain runs to 154 residues: Myoglobin (154 aa).

Residues valine 2–lysine 148 enclose the Globin domain. Serine 4 carries the post-translational modification Phosphoserine. Histidine 65 provides a ligand contact to nitrite. Histidine 65 is a binding site for O2. The residue at position 68 (threonine 68) is a Phosphothreonine. Heme b is bound at residue histidine 94.

The protein belongs to the globin family. As to quaternary structure, monomeric.

Its subcellular location is the cytoplasm. It localises to the sarcoplasm. The catalysed reaction is Fe(III)-heme b-[protein] + nitric oxide + H2O = Fe(II)-heme b-[protein] + nitrite + 2 H(+). The enzyme catalyses H2O2 + AH2 = A + 2 H2O. In terms of biological role, monomeric heme protein which primary function is to store oxygen and facilitate its diffusion within muscle tissues. Reversibly binds oxygen through a pentacoordinated heme iron and enables its timely and efficient release as needed during periods of heightened demand. Depending on the oxidative conditions of tissues and cells, and in addition to its ability to bind oxygen, it also has a nitrite reductase activity whereby it regulates the production of bioactive nitric oxide. Under stress conditions, like hypoxia and anoxia, it also protects cells against reactive oxygen species thanks to its pseudoperoxidase activity. The sequence is that of Myoglobin (MB) from Kogia breviceps (Pygmy sperm whale).